Here is a 118-residue protein sequence, read N- to C-terminus: Small ribosomal subunit protein uS13 (118 aa).

The disordered stretch occupies residues 94–118 (GLPVRGQRTKTNARTRKGPRKPIKK).

It belongs to the universal ribosomal protein uS13 family. As to quaternary structure, part of the 30S ribosomal subunit. Forms a loose heterodimer with protein S19. Forms two bridges to the 50S subunit in the 70S ribosome.

Functionally, located at the top of the head of the 30S subunit, it contacts several helices of the 16S rRNA. In the 70S ribosome it contacts the 23S rRNA (bridge B1a) and protein L5 of the 50S subunit (bridge B1b), connecting the 2 subunits; these bridges are implicated in subunit movement. Contacts the tRNAs in the A and P-sites. The polypeptide is Small ribosomal subunit protein uS13 (Edwardsiella ictaluri (strain 93-146)).